A 332-amino-acid chain; its full sequence is Pyrroline-5-carboxylate reductase (332 aa).

The protein belongs to the pyrroline-5-carboxylate reductase family.

The enzyme catalyses L-proline + NADP(+) = (S)-1-pyrroline-5-carboxylate + NADPH + 2 H(+). It catalyses the reaction L-proline + NAD(+) = (S)-1-pyrroline-5-carboxylate + NADH + 2 H(+). It functions in the pathway amino-acid biosynthesis; L-proline biosynthesis; L-proline from L-glutamate 5-semialdehyde: step 1/1. The sequence is that of Pyrroline-5-carboxylate reductase (pro-1) from Neurospora crassa (strain ATCC 24698 / 74-OR23-1A / CBS 708.71 / DSM 1257 / FGSC 987).